A 336-amino-acid polypeptide reads, in one-letter code: Ketol-acid reductoisomerase (NADP(+)) (336 aa).

The KARI N-terminal Rossmann domain occupies 1 to 182; the sequence is MAVIYYDKDA…GVTRAGVIET (182 aa). NADP(+) is bound by residues 25-28, arginine 48, serine 51, serine 53, and 83-86; these read YGSQ and DENQ. The active site involves histidine 108. Position 134 (glycine 134) interacts with NADP(+). The region spanning 183–328 is the KARI C-terminal knotted domain; that stretch reads TFKEETETDL…KELRKMMPWL (146 aa). Residues aspartate 191, glutamate 195, glutamate 227, and glutamate 231 each contribute to the Mg(2+) site. Serine 252 contacts substrate.

It belongs to the ketol-acid reductoisomerase family. It depends on Mg(2+) as a cofactor.

It catalyses the reaction (2R)-2,3-dihydroxy-3-methylbutanoate + NADP(+) = (2S)-2-acetolactate + NADPH + H(+). The catalysed reaction is (2R,3R)-2,3-dihydroxy-3-methylpentanoate + NADP(+) = (S)-2-ethyl-2-hydroxy-3-oxobutanoate + NADPH + H(+). The protein operates within amino-acid biosynthesis; L-isoleucine biosynthesis; L-isoleucine from 2-oxobutanoate: step 2/4. Its pathway is amino-acid biosynthesis; L-valine biosynthesis; L-valine from pyruvate: step 2/4. Its function is as follows. Involved in the biosynthesis of branched-chain amino acids (BCAA). Catalyzes an alkyl-migration followed by a ketol-acid reduction of (S)-2-acetolactate (S2AL) to yield (R)-2,3-dihydroxy-isovalerate. In the isomerase reaction, S2AL is rearranged via a Mg-dependent methyl migration to produce 3-hydroxy-3-methyl-2-ketobutyrate (HMKB). In the reductase reaction, this 2-ketoacid undergoes a metal-dependent reduction by NADPH to yield (R)-2,3-dihydroxy-isovalerate. This chain is Ketol-acid reductoisomerase (NADP(+)), found in Thermotoga petrophila (strain ATCC BAA-488 / DSM 13995 / JCM 10881 / RKU-1).